The following is a 124-amino-acid chain: Large ribosomal subunit protein bL20 (124 aa).

It belongs to the bacterial ribosomal protein bL20 family.

In terms of biological role, binds directly to 23S ribosomal RNA and is necessary for the in vitro assembly process of the 50S ribosomal subunit. It is not involved in the protein synthesizing functions of that subunit. The polypeptide is Large ribosomal subunit protein bL20 (rplT) (Mycoplasma genitalium (strain ATCC 33530 / DSM 19775 / NCTC 10195 / G37) (Mycoplasmoides genitalium)).